Reading from the N-terminus, the 69-residue chain is Putative membrane protein insertion efficiency factor (69 aa).

This sequence belongs to the UPF0161 family.

It localises to the cell inner membrane. In terms of biological role, could be involved in insertion of integral membrane proteins into the membrane. The chain is Putative membrane protein insertion efficiency factor from Nitrosomonas europaea (strain ATCC 19718 / CIP 103999 / KCTC 2705 / NBRC 14298).